A 446-amino-acid polypeptide reads, in one-letter code: Maltoporin (446 aa).

Residues 1–25 (MMITLRKLPLAVAVAAGVMSAQAMA) form the signal peptide.

It belongs to the porin LamB (TC 1.B.3) family. Homotrimer formed of three 18-stranded antiparallel beta-barrels, containing three independent channels.

The protein localises to the cell outer membrane. It catalyses the reaction beta-maltose(in) = beta-maltose(out). In terms of biological role, involved in the transport of maltose and maltodextrins. This is Maltoporin from Escherichia coli O6:K15:H31 (strain 536 / UPEC).